Here is a 281-residue protein sequence, read N- to C-terminus: Diaminopimelate epimerase (281 aa).

Residues Asn13, Gln46, and Asn66 each contribute to the substrate site. Cys75 acts as the Proton donor in catalysis. Substrate-binding positions include Gly76–Asn77, Asn160, Asn193, and Glu211–Arg212. Cys220 acts as the Proton acceptor in catalysis. Substrate is bound at residue Gly221–Thr222.

Belongs to the diaminopimelate epimerase family. As to quaternary structure, homodimer.

It localises to the cytoplasm. The catalysed reaction is (2S,6S)-2,6-diaminopimelate = meso-2,6-diaminopimelate. The protein operates within amino-acid biosynthesis; L-lysine biosynthesis via DAP pathway; DL-2,6-diaminopimelate from LL-2,6-diaminopimelate: step 1/1. Catalyzes the stereoinversion of LL-2,6-diaminopimelate (L,L-DAP) to meso-diaminopimelate (meso-DAP), a precursor of L-lysine and an essential component of the bacterial peptidoglycan. The protein is Diaminopimelate epimerase of Acinetobacter baumannii (strain AB307-0294).